Reading from the N-terminus, the 432-residue chain is Putative transferase At1g60990, chloroplastic (432 aa).

The transit peptide at 1 to 57 (MNLLQSCKDMAMMMRIDSVSHITNTALLPCLYNGTVLRRRSLSLRKCGFRERKFQLR) directs the protein to the chloroplast.

The protein belongs to the GcvT family. In terms of tissue distribution, expressed in young leaves (at protein level).

It is found in the plastid. The protein resides in the chloroplast. Functionally, folate-dependent protein involved in Fe/S cluster biogenesis. Functionally complements an E.coli mutant defective in ygfZ. This chain is Putative transferase At1g60990, chloroplastic, found in Arabidopsis thaliana (Mouse-ear cress).